The primary structure comprises 188 residues: Peptidyl-tRNA hydrolase (188 aa).

Residue Tyr14 coordinates tRNA. Residue His19 is the Proton acceptor of the active site. The tRNA site is built by Tyr60 and Asn62.

Belongs to the PTH family. As to quaternary structure, monomer.

It localises to the cytoplasm. It carries out the reaction an N-acyl-L-alpha-aminoacyl-tRNA + H2O = an N-acyl-L-amino acid + a tRNA + H(+). Functionally, hydrolyzes ribosome-free peptidyl-tRNAs (with 1 or more amino acids incorporated), which drop off the ribosome during protein synthesis, or as a result of ribosome stalling. Catalyzes the release of premature peptidyl moieties from peptidyl-tRNA molecules trapped in stalled 50S ribosomal subunits, and thus maintains levels of free tRNAs and 50S ribosomes. This Mycoplasmopsis agalactiae (strain NCTC 10123 / CIP 59.7 / PG2) (Mycoplasma agalactiae) protein is Peptidyl-tRNA hydrolase.